The following is a 188-amino-acid chain: Elongation factor P (188 aa).

The residue at position 34 (Lys34) is an N6-(3,6-diaminohexanoyl)-5-hydroxylysine.

This sequence belongs to the elongation factor P family. Post-translationally, may be beta-lysylated on the epsilon-amino group of Lys-34 by the combined action of EpmA and EpmB, and then hydroxylated on the C5 position of the same residue by EpmC (if this protein is present). Lysylation is critical for the stimulatory effect of EF-P on peptide-bond formation. The lysylation moiety may extend toward the peptidyltransferase center and stabilize the terminal 3-CCA end of the tRNA. Hydroxylation of the C5 position on Lys-34 may allow additional potential stabilizing hydrogen-bond interactions with the P-tRNA.

The protein localises to the cytoplasm. It participates in protein biosynthesis; polypeptide chain elongation. Its function is as follows. Involved in peptide bond synthesis. Alleviates ribosome stalling that occurs when 3 or more consecutive Pro residues or the sequence PPG is present in a protein, possibly by augmenting the peptidyl transferase activity of the ribosome. Modification of Lys-34 is required for alleviation. This Proteus mirabilis (strain HI4320) protein is Elongation factor P.